The sequence spans 1509 residues: Dynein axonemal assembly factor 1 homolog (1509 aa).

6 LRR repeats span residues 34 to 56, 57 to 78, 79 to 100, 101 to 122, 125 to 146, and 150 to 171; these read RLND…EEYT, ELKC…EKLS, KLKC…EPCR, ELDT…GTNI, VLNT…SDLV, and TLSV…KIFE. The 39-residue stretch at 185 to 223 folds into the LRRCT domain; that stretch reads PVVSRLPQYRKTLILACKELTYLDSRPVFPRDRACAEAW. Disordered stretches follow at residues 252 to 280, 306 to 327, 962 to 1008, and 1103 to 1122; these read CTIR…DDTC, HPTS…ATSS, SGDL…DSKN, and TLQT…KLRN. Residues 309 to 318 show a composition bias toward low complexity; that stretch reads SESGASTSSS. A compositionally biased stretch (acidic residues) spans 978-990; the sequence is SESEDYDTADDEY. The segment covering 1103–1112 has biased composition (polar residues); the sequence is TLQTSFSTVG.

This sequence belongs to the DNAAF1 family.

The protein localises to the cell projection. The protein resides in the cilium. Functionally, cilium-specific protein required for cilia structures. The protein is Dynein axonemal assembly factor 1 homolog (dtr) of Drosophila yakuba (Fruit fly).